Here is a 445-residue protein sequence, read N- to C-terminus: Protein PRRC1 (445 aa).

Disordered stretches follow at residues 1–71 (MMEE…PSAP) and 105–167 (PPVS…TGLL). Residues 27–49 (MSSTPVPLAATSSFSSPNVSSME) show a composition bias toward polar residues. A compositionally biased stretch (pro residues) spans 59–71 (PQPPLPPVRPSAP). Phosphoserine occurs at positions 209 and 408.

It belongs to the PRRC1 family. As to quaternary structure, interacts with PRKAR1A; resulting in PKA activation. In terms of tissue distribution, ubiquitously expressed with higher expression in kidney, liver and placenta. Detected in embryonic kidney cells (HEK293 cells) (at protein level). As to expression, specifically expressed in liver.

Its subcellular location is the golgi apparatus. The protein resides in the cytoplasm. In terms of biological role, may act as a regulator of the protein kinase A (PKA) activity during embryonic development. This is Protein PRRC1 (PRRC1) from Homo sapiens (Human).